The sequence spans 505 residues: ATP synthase subunit alpha, chloroplastic (505 aa).

Residue 170-177 (GDRQTGKT) coordinates ATP.

The protein belongs to the ATPase alpha/beta chains family. As to quaternary structure, F-type ATPases have 2 components, CF(1) - the catalytic core - and CF(0) - the membrane proton channel. CF(1) has five subunits: alpha(3), beta(3), gamma(1), delta(1), epsilon(1). CF(0) has four main subunits: a, b, b' and c.

The protein localises to the plastid. The protein resides in the chloroplast thylakoid membrane. It carries out the reaction ATP + H2O + 4 H(+)(in) = ADP + phosphate + 5 H(+)(out). Functionally, produces ATP from ADP in the presence of a proton gradient across the membrane. The alpha chain is a regulatory subunit. The chain is ATP synthase subunit alpha, chloroplastic from Mesostigma viride (Green alga).